The primary structure comprises 216 residues: Uracil phosphoribosyltransferase (216 aa).

Residues arginine 85, arginine 110, and 135–143 (DPMVATGYS) each bind 5-phospho-alpha-D-ribose 1-diphosphate. Uracil-binding positions include isoleucine 200 and 205-207 (GDA). Residue aspartate 206 coordinates 5-phospho-alpha-D-ribose 1-diphosphate.

This sequence belongs to the UPRTase family. Mg(2+) serves as cofactor.

It catalyses the reaction UMP + diphosphate = 5-phospho-alpha-D-ribose 1-diphosphate + uracil. Its pathway is pyrimidine metabolism; UMP biosynthesis via salvage pathway; UMP from uracil: step 1/1. Its activity is regulated as follows. Allosterically activated by GTP. In terms of biological role, catalyzes the conversion of uracil and 5-phospho-alpha-D-ribose 1-diphosphate (PRPP) to UMP and diphosphate. This Burkholderia mallei (strain NCTC 10247) protein is Uracil phosphoribosyltransferase.